Consider the following 602-residue polypeptide: Beta-(1--&gt;2)glucan export ATP-binding/permease protein NdvA (602 aa).

The ABC transmembrane type-1 domain occupies 21-311 (GWVLAGANLL…VVGFVNSVFM (291 aa)). 6 helical membrane passes run 22 to 42 (WVLAGANLLLAAAQFAEPVLF), 68 to 88 (LLLAWAVFGLFTIGCGAAVAL), 146 to 166 (EHFAALMSLVVLLPLSIYINW), 167 to 187 (RLALLLFALCVVFTVLTTLVV), 238 to 258 (LLAMQMPVLSWWALVTVITRA), and 285 to 305 (IVMFVSFATMLIQKLEQVVGF). Positions 345–579 (VEFDNVSFSY…RGYFAELAHA (235 aa)) constitute an ABC transporter domain. 378 to 385 (GATGAGKS) is an ATP binding site.

The protein belongs to the ABC transporter superfamily. Beta-(1--&gt;2)glucan exporter (TC 3.A.1.108.1) family. In terms of assembly, homodimer.

Its subcellular location is the cell inner membrane. The enzyme catalyses [(1-&gt;2)-beta-D-glucosyl](n)(in) + ATP + H2O = [(1-&gt;2)-beta-D-glucosyl](n)(out) + ADP + phosphate + H(+). Involved in Beta-(1--&gt;2)glucan export. Transmembrane domains (TMD) form a pore in the inner membrane and the ATP-binding domain (NBD) is responsible for energy generation. In Rhodopseudomonas palustris (strain BisA53), this protein is Beta-(1--&gt;2)glucan export ATP-binding/permease protein NdvA.